Here is a 134-residue protein sequence, read N- to C-terminus: Small ribosomal subunit protein uS8c (134 aa).

The protein belongs to the universal ribosomal protein uS8 family. In terms of assembly, part of the 30S ribosomal subunit.

The protein resides in the plastid. It localises to the chloroplast. Its function is as follows. One of the primary rRNA binding proteins, it binds directly to 16S rRNA central domain where it helps coordinate assembly of the platform of the 30S subunit. The chain is Small ribosomal subunit protein uS8c (rps8) from Lepidium virginicum (Virginia pepperweed).